The following is an 81-amino-acid chain: EC protein I/II (81 aa).

Belongs to the metallothionein superfamily. Type 15 family.

In terms of biological role, binds 5 molecules of zinc. May have a role in Zn(2+) homeostasis during embryogenesis. This Triticum aestivum (Wheat) protein is EC protein I/II.